We begin with the raw amino-acid sequence, 107 residues long: U1-lycotoxin-Ls1n (107 aa).

Positions 1-20 (MMKVLVVVALLVTLISYSSS) are cleaved as a signal peptide. Positions 21–41 (EGIDDLEADELLSLMANEQTR) are excised as a propeptide. Disulfide bonds link C44/C59, C51/C68, C58/C86, and C70/C84.

This sequence belongs to the neurotoxin 19 (CSTX) family. 04 (U1-Lctx) subfamily. In terms of tissue distribution, expressed by the venom gland.

The protein localises to the secreted. The protein is U1-lycotoxin-Ls1n of Lycosa singoriensis (Wolf spider).